The sequence spans 2214 residues: Non-reducing polyketide synthase dpmpA (2214 aa).

The tract at residues 75-178 is N-terminal acylcarrier protein transacylase domain (SAT); sequence EWIRTGDSHV…LAVCAGAWKD (104 aa). In terms of domain architecture, Ketosynthase family 3 (KS3) spans 372–784; that stretch reads DESIAIVGAS…GNNTAMIVCQ (413 aa). Catalysis depends on for beta-ketoacyl synthase activity residues Cys-532, His-667, and His-707. The interval 888–1184 is malonyl-CoA:ACP transacylase (MAT) domain; it reads VFAGQTGHRP…AFLSARLGSP (297 aa). Ser-974 (for acyl/malonyl transferase activity) is an active-site residue. Residues 1255–1389 are N-terminal hotdog fold; it reads PQLVSVVRSS…GIIKSQEQDR (135 aa). The PKS/mFAS DH domain maps to 1255-1566; the sequence is PQLVSVVRSS…FSKVPVRSLQ (312 aa). The product template (PT) domain stretch occupies residues 1265–1560; it reads GGADPEAAEF…AILGARFSKV (296 aa). The C-terminal hotdog fold stretch occupies residues 1416 to 1566; it reads GASVVQGAFV…FSKVPVRSLQ (151 aa). Carrier domains lie at 1620–1695 and 1722–1802; these read NEVK…HSRL and KAST…SGAD. At Ser-1654 the chain carries O-(pantetheine 4'-phosphoryl)serine. The tract at residues 1698–1728 is disordered; sequence VPQLSPHDTDRSSDLSAGQPPSTPKASTQEQ. The span at 1711–1726 shows a compositional bias: polar residues; that stretch reads DLSAGQPPSTPKASTQ. Ser-1762 carries the post-translational modification O-(pantetheine 4'-phosphoryl)serine. Positions 1805-1827 are disordered; the sequence is GFPRTSDNRRSEEGSVGHVGPEK. Residues 1810-1827 are compositionally biased toward basic and acidic residues; that stretch reads SDNRRSEEGSVGHVGPEK. Residues 1958 to 2210 are methyltransferase (CMeT) domain; that stretch reads FPAYRPDHRL…SREADLFRWI (253 aa).

The protein operates within secondary metabolite biosynthesis; terpenoid biosynthesis. Non-reducing polyketide synthase; part of the gene cluster that mediates the biosynthesis of diterpenoid pyrones. The first step of the pathway is the synthesis of the alpha-pyrone moiety by the polyketide synthase dpmpA via condensation of one acetyl-CoA starter unit with 3 malonyl-CoA units and 2 methylations. The alpha-pyrone is then combined with geranylgeranyl pyrophosphate (GGPP) formed by the GGPP synthase dpmpD through the action of the prenyltransferase dpmpC to yield a linear alpha-pyrone diterpenoid. Subsequent steps in the diterpenoid pyrone biosynthetic pathway involve the decalin core formation, which is initiated by the epoxidation of the C10-C11 olefin by the FAD-dependent oxidoreductase dpmpE, and is followed by a cyclization cascade catalyzed by the terpene cyclase dpmpB. The short chain dehydrogenase/reductase dpmpG then oxidizes the 8S hydroxy group to a ketone and the short chain dehydrogenase/reductase dpmpH reduces the ketone to the 8R hydroxy group to yield higginsianin B. Higginsianin B is further methylated by the methyltransferase dpmpI to produce the intermediate named FDDP B. The cytochrome P450 monooxygenase dpmpJ then oxidizes the C-26 methyl to primary alcohol, producing the final diterpenoid pyrone with a C-26 primary alcohol on the gamma-pyrone moiety named FDDP C. The polypeptide is Non-reducing polyketide synthase dpmpA (Macrophomina phaseolina (strain MS6) (Charcoal rot fungus)).